Here is a 174-residue protein sequence, read N- to C-terminus: Crossover junction endodeoxyribonuclease RuvC (174 aa).

Active-site residues include Asp-8, Glu-68, and Asp-140. Mg(2+)-binding residues include Asp-8, Glu-68, and Asp-140.

This sequence belongs to the RuvC family. Homodimer which binds Holliday junction (HJ) DNA. The HJ becomes 2-fold symmetrical on binding to RuvC with unstacked arms; it has a different conformation from HJ DNA in complex with RuvA. In the full resolvosome a probable DNA-RuvA(4)-RuvB(12)-RuvC(2) complex forms which resolves the HJ. Mg(2+) serves as cofactor.

Its subcellular location is the cytoplasm. The enzyme catalyses Endonucleolytic cleavage at a junction such as a reciprocal single-stranded crossover between two homologous DNA duplexes (Holliday junction).. In terms of biological role, the RuvA-RuvB-RuvC complex processes Holliday junction (HJ) DNA during genetic recombination and DNA repair. Endonuclease that resolves HJ intermediates. Cleaves cruciform DNA by making single-stranded nicks across the HJ at symmetrical positions within the homologous arms, yielding a 5'-phosphate and a 3'-hydroxyl group; requires a central core of homology in the junction. The consensus cleavage sequence is 5'-(A/T)TT(C/G)-3'. Cleavage occurs on the 3'-side of the TT dinucleotide at the point of strand exchange. HJ branch migration catalyzed by RuvA-RuvB allows RuvC to scan DNA until it finds its consensus sequence, where it cleaves and resolves the cruciform DNA. The protein is Crossover junction endodeoxyribonuclease RuvC of Legionella pneumophila (strain Paris).